Consider the following 429-residue polypeptide: Enolase (429 aa).

A (2R)-2-phosphoglycerate-binding site is contributed by Gln-163. The active-site Proton donor is the Glu-205. Mg(2+) contacts are provided by Asp-242, Glu-286, and Asp-313. (2R)-2-phosphoglycerate contacts are provided by Lys-338, Arg-367, Ser-368, and Lys-389. Lys-338 serves as the catalytic Proton acceptor.

It belongs to the enolase family. It depends on Mg(2+) as a cofactor.

It is found in the cytoplasm. The protein resides in the secreted. The protein localises to the cell surface. The enzyme catalyses (2R)-2-phosphoglycerate = phosphoenolpyruvate + H2O. It functions in the pathway carbohydrate degradation; glycolysis; pyruvate from D-glyceraldehyde 3-phosphate: step 4/5. Its function is as follows. Catalyzes the reversible conversion of 2-phosphoglycerate (2-PG) into phosphoenolpyruvate (PEP). It is essential for the degradation of carbohydrates via glycolysis. The polypeptide is Enolase (Thermoanaerobacter pseudethanolicus (strain ATCC 33223 / 39E) (Clostridium thermohydrosulfuricum)).